Consider the following 268-residue polypeptide: Fibroblast growth factor 8 (268 aa).

A signal peptide spans 1–22 (MGSPRSALSCLLLHLLVLCLQA). Glutamine 23 is subject to Pyrrolidone carboxylic acid. Positions 29-87 (QKRGPGAGNPADTLGQGHEDRPFGQRSRAGKNFTNPAPNYPEEGSKEQRDSVLPKVTQR) are disordered. Asparagine 60 is a glycosylation site (N-linked (GlcNAc...) asparagine). Residues 71-80 (EGSKEQRDSV) are compositionally biased toward basic and acidic residues. N-linked (GlcNAc...) asparagine glycosylation is present at asparagine 190.

The protein belongs to the heparin-binding growth factors family. As to quaternary structure, monomer. Homodimer. Interacts with FGFR1, FGFR2, FGFR3 and FGFR4. Affinity between fibroblast growth factors (FGFs) and their receptors is increased by heparan sulfate glycosaminoglycans that function as coreceptors. Post-translationally, the N-terminus is blocked. In terms of tissue distribution, absent in normal mammary glands and detected only in adult testis and ovary and in midgestational embryos.

It localises to the secreted. Plays an important role in the regulation of embryonic development, cell proliferation, cell differentiation and cell migration. Required for normal brain, eye, ear and limb development during embryogenesis. Required for normal development of the gonadotropin-releasing hormone (GnRH) neuronal system. Plays a role in neurite outgrowth in hippocampal cells. Cooperates with Wnt-1 in mouse mammary tumor virus-induced murine mammary tumorigenesis. This Mus musculus (Mouse) protein is Fibroblast growth factor 8 (Fgf8).